Reading from the N-terminus, the 232-residue chain is MIIIVKIKRGLIVSCQALENEPLHSSFIMSKMALAAKIGGAIGIRANGVNDISQIKLEVDLPIIGIIKKNYNNCDVFITPTMKEIDELCNEGVDIIALDATFRNRPDGVLLDDFFENIKKKYPKQCLMADISSLDEAINADKLGFDFIGTTLYGYTKNTNGLNIADNDFNFLRTLLNSNLKSTLIVEGKIDTPLKAQKCFEMGVDLVVVGGAITRPAEITKKFVEKINQIKK.

It belongs to the NanE family.

The enzyme catalyses an N-acyl-D-glucosamine 6-phosphate = an N-acyl-D-mannosamine 6-phosphate. The protein operates within amino-sugar metabolism; N-acetylneuraminate degradation; D-fructose 6-phosphate from N-acetylneuraminate: step 3/5. In terms of biological role, converts N-acetylmannosamine-6-phosphate (ManNAc-6-P) to N-acetylglucosamine-6-phosphate (GlcNAc-6-P). This Borreliella burgdorferi (strain ZS7) (Borrelia burgdorferi) protein is Putative N-acetylmannosamine-6-phosphate 2-epimerase.